Consider the following 1434-residue polypeptide: Probable ATP-dependent DNA helicase HFM1 (1434 aa).

A Helicase ATP-binding domain is found at 289 to 476; the sequence is DDLLYTDRNF…WLSDGERPAV (188 aa). 302 to 309 contributes to the ATP binding site; sequence APTGSGKT. Positions 410-413 match the DEAH box motif; sequence DEVH. The Helicase C-terminal domain occupies 514-718; that stretch reads KVYSVIRTYS…DVNIALDWIR (205 aa). Positions 775–1089 constitute an SEC63 domain; the sequence is PTEAGRLMAW…VGLDIHQKFT (315 aa). Residues 1110-1130 are disordered; it reads TDISHSDYSGRATATGSSKGM. A C4-type zinc finger spans residues 1141–1156; sequence CHHHCKNKHACGHDCC. The segment at 1294–1333 is disordered; it reads GFGDTRDSSLGGSKLPFQKSSSRFQRDNSNSFASSPGKPD. The span at 1311-1327 shows a compositional bias: polar residues; sequence QKSSSRFQRDNSNSFAS.

This sequence belongs to the helicase family. SKI2 subfamily. Zn(2+) serves as cofactor.

It catalyses the reaction Couples ATP hydrolysis with the unwinding of duplex DNA by translocating in the 3'-5' direction.. It carries out the reaction ATP + H2O = ADP + phosphate + H(+). In terms of biological role, required for crossover formation and complete synapsis of homologous chromosomes during meiosis. The polypeptide is Probable ATP-dependent DNA helicase HFM1 (Mus musculus (Mouse)).